The chain runs to 456 residues: Chitin synthase regulatory factor 1 (456 aa).

Disordered stretches follow at residues 1–20 (MPAS…ALLV), 38–74 (ESPL…SLSS), and 139–158 (SKPS…SGSE). Over residues 140 to 158 (KPSLSSNSSDSSFSKSGSE) the composition is skewed to low complexity. Residues S227 and S230 each carry the phosphoserine modification. Sel1-like repeat units lie at residues 293-327 (NFVP…SLGH), 328-364 (DRSS…DKGN), 365-402 (ADAM…MLGH), and 403-438 (APAC…INDS).

Its function is as follows. Involved in chitin biosynthesis. The protein is Chitin synthase regulatory factor 1 (chr1) of Schizosaccharomyces pombe (strain 972 / ATCC 24843) (Fission yeast).